A 138-amino-acid polypeptide reads, in one-letter code: Integration host factor subunit beta (138 aa).

The span at 81–98 (KAGKELRERVDRSLERQG) shows a compositional bias: basic and acidic residues. Residues 81-138 (KAGKELRERVDRSLERQGDSSSEGEPVSLTAVKAARQAGGHHAAGFPAEATPTLVMSR) are disordered.

This sequence belongs to the bacterial histone-like protein family. Heterodimer of an alpha and a beta chain.

In terms of biological role, this protein is one of the two subunits of integration host factor, a specific DNA-binding protein that functions in genetic recombination as well as in transcriptional and translational control. The polypeptide is Integration host factor subunit beta (Ralstonia nicotianae (strain ATCC BAA-1114 / GMI1000) (Ralstonia solanacearum)).